A 358-amino-acid polypeptide reads, in one-letter code: 3-dehydroquinate synthase (358 aa).

NAD(+) is bound by residues 70–75, 104–108, 128–129, lysine 141, lysine 150, and 168–171; these read DGEQFK, GVIGD, TT, and CLHT. Positions 183, 246, and 263 each coordinate Zn(2+).

It belongs to the sugar phosphate cyclases superfamily. Dehydroquinate synthase family. Requires Co(2+) as cofactor. It depends on Zn(2+) as a cofactor. NAD(+) is required as a cofactor.

The protein resides in the cytoplasm. It carries out the reaction 7-phospho-2-dehydro-3-deoxy-D-arabino-heptonate = 3-dehydroquinate + phosphate. It functions in the pathway metabolic intermediate biosynthesis; chorismate biosynthesis; chorismate from D-erythrose 4-phosphate and phosphoenolpyruvate: step 2/7. Catalyzes the conversion of 3-deoxy-D-arabino-heptulosonate 7-phosphate (DAHP) to dehydroquinate (DHQ). This is 3-dehydroquinate synthase from Shewanella baltica (strain OS155 / ATCC BAA-1091).